Reading from the N-terminus, the 274-residue chain is Dermonecrotic toxin SdSicTox-betaIIB1bxiii (274 aa).

His5 is a catalytic residue. 2 residues coordinate Mg(2+): Glu25 and Asp27. His41 acts as the Nucleophile in catalysis. Intrachain disulfides connect Cys45/Cys51 and Cys47/Cys190. Asp85 contacts Mg(2+).

Belongs to the arthropod phospholipase D family. Class II subfamily. Mg(2+) is required as a cofactor. As to expression, expressed by the venom gland.

The protein localises to the secreted. The enzyme catalyses an N-(acyl)-sphingosylphosphocholine = an N-(acyl)-sphingosyl-1,3-cyclic phosphate + choline. It carries out the reaction an N-(acyl)-sphingosylphosphoethanolamine = an N-(acyl)-sphingosyl-1,3-cyclic phosphate + ethanolamine. It catalyses the reaction a 1-acyl-sn-glycero-3-phosphocholine = a 1-acyl-sn-glycero-2,3-cyclic phosphate + choline. The catalysed reaction is a 1-acyl-sn-glycero-3-phosphoethanolamine = a 1-acyl-sn-glycero-2,3-cyclic phosphate + ethanolamine. Dermonecrotic toxins cleave the phosphodiester linkage between the phosphate and headgroup of certain phospholipids (sphingolipid and lysolipid substrates), forming an alcohol (often choline) and a cyclic phosphate. This toxin acts on sphingomyelin (SM). It may also act on ceramide phosphoethanolamine (CPE), lysophosphatidylcholine (LPC) and lysophosphatidylethanolamine (LPE), but not on lysophosphatidylserine (LPS), and lysophosphatidylglycerol (LPG). It acts by transphosphatidylation, releasing exclusively cyclic phosphate products as second products. Induces dermonecrosis, hemolysis, increased vascular permeability, edema, inflammatory response, and platelet aggregation. The polypeptide is Dermonecrotic toxin SdSicTox-betaIIB1bxiii (Sicarius cf. damarensis (strain GJB-2008) (Six-eyed sand spider)).